The chain runs to 318 residues: Probable plastid-lipid-associated protein 1, chloroplastic (318 aa).

The transit peptide at 1-55 (MATVPLFTQFPCKTLNPSSSNTKHQSKSPILLPINSINRRSEIGVSVHRPDFKIR) directs the protein to the chloroplast. Residue Thr-57 is modified to Phosphothreonine.

The protein belongs to the PAP/fibrillin family. In terms of assembly, interacts (via N-terminus) with ABI2. As to expression, expressed in flower buds. Detected in tapetal cells, endothecium and connective in anthers and in subepidermal cells in filaments.

It localises to the plastid. The protein resides in the chloroplast. Its subcellular location is the plastoglobule. It is found in the chloroplast thylakoid. Probably involved in light/cold stress-related jasmonate (JA) biosynthesis. Contributes to the protection of photosystem II (PSII) against light stress. This chain is Probable plastid-lipid-associated protein 1, chloroplastic (PAP1), found in Arabidopsis thaliana (Mouse-ear cress).